The following is a 239-amino-acid chain: Uridylate kinase (239 aa).

Residue 10–13 (KISG) coordinates ATP. The tract at residues 18-23 (GESGYG) is involved in allosteric activation by GTP. Gly52 lines the UMP pocket. Residues Gly53 and Arg57 each contribute to the ATP site. UMP contacts are provided by residues Asp72 and 133–140 (TGNPYFTT). ATP-binding residues include Thr160, Tyr166, and Asp169.

This sequence belongs to the UMP kinase family. As to quaternary structure, homohexamer.

The protein resides in the cytoplasm. The catalysed reaction is UMP + ATP = UDP + ADP. The protein operates within pyrimidine metabolism; CTP biosynthesis via de novo pathway; UDP from UMP (UMPK route): step 1/1. Its activity is regulated as follows. Allosterically activated by GTP. Inhibited by UTP. Catalyzes the reversible phosphorylation of UMP to UDP. This chain is Uridylate kinase, found in Chlorobaculum tepidum (strain ATCC 49652 / DSM 12025 / NBRC 103806 / TLS) (Chlorobium tepidum).